Reading from the N-terminus, the 384-residue chain is Involucrin (384 aa).

Residues 1 to 384 are disordered; sequence MSQQHTLPVT…LPEQPQEPEV (384 aa). Basic and acidic residues-rich tracts occupy residues 56–65 and 80–134; these read PSKHEEKGTD and PELH…ELHL. Low complexity predominate over residues 137-146; it reads QQQQESQEQE. Residues 179 to 208 are compositionally biased toward basic and acidic residues; that stretch reads KQREPQESQEQRLHLGKEQESQEQRLHLGE. Residues 239-267 are compositionally biased toward low complexity; that stretch reads PEQRLQLLPQGPQEQELHLGKQQQQQESQ. Basic and acidic residues-rich tracts occupy residues 268 to 308 and 315 to 336; these read QHQE…KKLL and EAVK…KEQL.

The protein belongs to the involucrin family. As to quaternary structure, directly or indirectly cross-linked to cornifelin (CNFN). In terms of processing, substrate of transglutaminase. Specific glutamines or lysines are cross-linked to keratins, desmoplakin and to inter involucrin molecules. As to expression, keratinocytes of epidermis and other stratified squamous epithelia.

Its subcellular location is the cytoplasm. Functionally, part of the insoluble cornified cell envelope (CE) of stratified squamous epithelia. This chain is Involucrin (IVL), found in Otolemur crassicaudatus (Brown greater galago).